The following is a 387-amino-acid chain: O-phospho-L-seryl-tRNA:Cys-tRNA synthase 2 (387 aa).

Pyridoxal 5'-phosphate-binding positions include 89-90 (AR), Asn196, and 219-221 (SGH). Lys222 is modified (N6-(pyridoxal phosphate)lysine).

It belongs to the SepCysS family. Homodimer. Interacts with SepRS. The cofactor is pyridoxal 5'-phosphate.

The catalysed reaction is O-phospho-L-seryl-tRNA(Cys) + hydrogen sulfide + H(+) = L-cysteinyl-tRNA(Cys) + phosphate. In terms of biological role, converts O-phospho-L-seryl-tRNA(Cys) (Sep-tRNA(Cys)) to L-cysteinyl-tRNA(Cys) (Cys-tRNA(Cys)). The sequence is that of O-phospho-L-seryl-tRNA:Cys-tRNA synthase 2 from Methanococcoides burtonii (strain DSM 6242 / NBRC 107633 / OCM 468 / ACE-M).